The sequence spans 106 residues: Stress-responsive protein 1 (106 aa).

Its subcellular location is the mitochondrion. Stress-responsive protein that may play a role in regulation of cell cycle. The sequence is that of Stress-responsive protein 1 (sro1) from Schizosaccharomyces pombe (strain 972 / ATCC 24843) (Fission yeast).